We begin with the raw amino-acid sequence, 263 residues long: Glucosamine-6-phosphate deaminase (263 aa).

The active-site Proton acceptor; for enolization step is D72. D141 acts as the For ring-opening step in catalysis. The active-site Proton acceptor; for ring-opening step is H143. The For ring-opening step role is filled by E148.

Belongs to the glucosamine/galactosamine-6-phosphate isomerase family. NagB subfamily.

It catalyses the reaction alpha-D-glucosamine 6-phosphate + H2O = beta-D-fructose 6-phosphate + NH4(+). The protein operates within amino-sugar metabolism; N-acetylneuraminate degradation; D-fructose 6-phosphate from N-acetylneuraminate: step 5/5. With respect to regulation, allosterically activated by N-acetylglucosamine 6-phosphate (GlcNAc6P). Catalyzes the reversible isomerization-deamination of glucosamine 6-phosphate (GlcN6P) to form fructose 6-phosphate (Fru6P) and ammonium ion. This chain is Glucosamine-6-phosphate deaminase, found in Phocaeicola vulgatus (strain ATCC 8482 / DSM 1447 / JCM 5826 / CCUG 4940 / NBRC 14291 / NCTC 11154) (Bacteroides vulgatus).